A 108-amino-acid chain; its full sequence is Cell cycle protein GpsB (108 aa).

Residues 32-69 (LDNVIKDYENFNAQIEALKAENEALKKAKYQARNTVSA) adopt a coiled-coil conformation.

This sequence belongs to the GpsB family. In terms of assembly, forms polymers through the coiled coil domains. Interacts with PBP1, MreC and EzrA.

The protein localises to the cytoplasm. In terms of biological role, divisome component that associates with the complex late in its assembly, after the Z-ring is formed, and is dependent on DivIC and PBP2B for its recruitment to the divisome. Together with EzrA, is a key component of the system that regulates PBP1 localization during cell cycle progression. Its main role could be the removal of PBP1 from the cell pole after pole maturation is completed. Also contributes to the recruitment of PBP1 to the division complex. Not essential for septum formation. In Streptococcus pyogenes serotype M49 (strain NZ131), this protein is Cell cycle protein GpsB.